Reading from the N-terminus, the 133-residue chain is Large ribosomal subunit protein bL20 (133 aa).

It belongs to the bacterial ribosomal protein bL20 family.

Its function is as follows. Binds directly to 23S ribosomal RNA and is necessary for the in vitro assembly process of the 50S ribosomal subunit. It is not involved in the protein synthesizing functions of that subunit. The polypeptide is Large ribosomal subunit protein bL20 (Bartonella henselae (strain ATCC 49882 / DSM 28221 / CCUG 30454 / Houston 1) (Rochalimaea henselae)).